A 351-amino-acid polypeptide reads, in one-letter code: Soluble interferon alpha/beta receptor OPG204 (351 aa).

The first 23 residues, 1-23 (MKMKMMVRIYFVSLSLLLFHSYA), serve as a signal peptide directing secretion. 2 Ig-like C2-type domains span residues 65-137 (LGEP…KNGD) and 155-237 (PKTY…IVVS). Intrachain disulfides connect Cys73/Cys129 and Cys172/Cys221. N-linked (GlcNAc...) asparagine; by host glycans are attached at residues Asn117, Asn182, Asn261, Asn269, and Asn321. The Ig-like V-type domain occupies 246-345 (PSQDHRFKLI…HNYYFDKTLT (100 aa)). A disulfide bridge links Cys272 with Cys333.

The protein belongs to the interleukin-1 receptor family. Interacts with host IFNA1.

The protein localises to the secreted. Functionally, counteracts the antiviral effects of host IFN-alpha/beta and key IFN-inducible proteins involved in viral RNA degradation suxh as host OAS1. Acts as a soluble IFN-alpha receptor and thus inhibits the interaction between host IFN-alpha and its receptor. This Cynomys gunnisoni (Gunnison's prairie dog) protein is Soluble interferon alpha/beta receptor OPG204 (OPG204).